Consider the following 207-residue polypeptide: Imidazole glycerol phosphate synthase subunit HisH (207 aa).

Positions 1 to 206 (MMIVIGYDAG…KEYVYENTAR (206 aa)) constitute a Glutamine amidotransferase type-1 domain. The active-site Nucleophile is the Cys79. Catalysis depends on residues His181 and Glu183.

Heterodimer of HisH and HisF.

Its subcellular location is the cytoplasm. The catalysed reaction is 5-[(5-phospho-1-deoxy-D-ribulos-1-ylimino)methylamino]-1-(5-phospho-beta-D-ribosyl)imidazole-4-carboxamide + L-glutamine = D-erythro-1-(imidazol-4-yl)glycerol 3-phosphate + 5-amino-1-(5-phospho-beta-D-ribosyl)imidazole-4-carboxamide + L-glutamate + H(+). It catalyses the reaction L-glutamine + H2O = L-glutamate + NH4(+). The protein operates within amino-acid biosynthesis; L-histidine biosynthesis; L-histidine from 5-phospho-alpha-D-ribose 1-diphosphate: step 5/9. Its function is as follows. IGPS catalyzes the conversion of PRFAR and glutamine to IGP, AICAR and glutamate. The HisH subunit catalyzes the hydrolysis of glutamine to glutamate and ammonia as part of the synthesis of IGP and AICAR. The resulting ammonia molecule is channeled to the active site of HisF. The polypeptide is Imidazole glycerol phosphate synthase subunit HisH (Streptococcus gordonii (strain Challis / ATCC 35105 / BCRC 15272 / CH1 / DL1 / V288)).